A 1383-amino-acid polypeptide reads, in one-letter code: DNA-directed RNA polymerase subunit beta (1383 aa).

It belongs to the RNA polymerase beta chain family. The RNAP catalytic core consists of 2 alpha, 1 beta, 1 beta' and 1 omega subunit. When a sigma factor is associated with the core the holoenzyme is formed, which can initiate transcription.

The enzyme catalyses RNA(n) + a ribonucleoside 5'-triphosphate = RNA(n+1) + diphosphate. DNA-dependent RNA polymerase catalyzes the transcription of DNA into RNA using the four ribonucleoside triphosphates as substrates. The sequence is that of DNA-directed RNA polymerase subunit beta from Xanthomonas oryzae pv. oryzae (strain MAFF 311018).